A 336-amino-acid polypeptide reads, in one-letter code: 25S rRNA (uridine(2634)-N(3))-methyltransferase (336 aa).

Residues 286-307 (PGYHHRRTNSEQDTTKPAKERD) are disordered. Positions 293–307 (TNSEQDTTKPAKERD) are enriched in basic and acidic residues.

It belongs to the class I-like SAM-binding methyltransferase superfamily. BMT5 family.

The protein resides in the nucleus. Its subcellular location is the nucleolus. The catalysed reaction is uridine(2634) in 25S rRNA + S-adenosyl-L-methionine = N(3)-methyluridine(2634) in 25S rRNA + S-adenosyl-L-homocysteine + H(+). Its function is as follows. S-adenosyl-L-methionine-dependent methyltransferase that specifically methylates the N(3) position of uridine 2634 (m3U2634) in 25S rRNA. The protein is 25S rRNA (uridine(2634)-N(3))-methyltransferase (BMT5) of Saccharomyces cerevisiae (strain ATCC 204508 / S288c) (Baker's yeast).